The primary structure comprises 292 residues: Elongation factor Ts (292 aa).

Residues 81-84 (TDFV) are involved in Mg(2+) ion dislocation from EF-Tu.

This sequence belongs to the EF-Ts family.

The protein resides in the cytoplasm. In terms of biological role, associates with the EF-Tu.GDP complex and induces the exchange of GDP to GTP. It remains bound to the aminoacyl-tRNA.EF-Tu.GTP complex up to the GTP hydrolysis stage on the ribosome. The polypeptide is Elongation factor Ts (Psychromonas ingrahamii (strain DSM 17664 / CCUG 51855 / 37)).